The primary structure comprises 458 residues: MTAKTIFDKLWDRHVVAGNEGEPQLLYIDLHVIHEVTSPQAFQGLRDAGRSVRRRDLTYGTLDHNVPTKDIFNIQDLISKKQIDTFTKNVKEFGIPAEAHGGKGQGIVHMVAPESGRTQPGKTIVCGDSHTATNGAFGAIAFGIGTSEVEHVLATQTIWQVKPKRMKIEFQGHPQKGVYSKDFILALIAKYGVDAGVGYAVEYTGNAISDLSMEERMTICNMSIEFGAKMGQMNPDEKTYDYVKGREYAPENFDEAVSKWEKLVSDSDAVYDKVLTLDVSQLKPMVTWGTNPGMGLEFGEEFPKINDDLNYERAYQYMDLKPGQTASDIDLGYIFIGSCTNARLGDLEEAAKIIKGNHIADGLTGIVVPGSRPVKIADEELGLDKIFKNAGFEWREPVCSACLGMNPDQIPAYVHCASTSNRNFEGRQGHNARTHLCSPAMAAAAAIAGKFVDVREIV.

[4Fe-4S] cluster contacts are provided by cysteine 339, cysteine 399, and cysteine 402.

This sequence belongs to the aconitase/IPM isomerase family. LeuC type 1 subfamily. Heterodimer of LeuC and LeuD. It depends on [4Fe-4S] cluster as a cofactor.

It carries out the reaction (2R,3S)-3-isopropylmalate = (2S)-2-isopropylmalate. Its pathway is amino-acid biosynthesis; L-leucine biosynthesis; L-leucine from 3-methyl-2-oxobutanoate: step 2/4. Catalyzes the isomerization between 2-isopropylmalate and 3-isopropylmalate, via the formation of 2-isopropylmaleate. The polypeptide is 3-isopropylmalate dehydratase large subunit (Lactococcus lactis subsp. cremoris (strain SK11)).